We begin with the raw amino-acid sequence, 356 residues long: Probable protein phosphatase 2C T23F11.1 (356 aa).

The PPM-type phosphatase domain maps to 23-286; sequence LVGSSCMQGW…DNMTVVLVGL (264 aa). Mn(2+) contacts are provided by Asp59, Gly60, Asp228, and Asp277. The interval 336-356 is disordered; that stretch reads NAANQEEEEDDNEPAPANFQV.

The protein belongs to the PP2C family. It depends on Mg(2+) as a cofactor. Mn(2+) serves as cofactor.

The enzyme catalyses O-phospho-L-seryl-[protein] + H2O = L-seryl-[protein] + phosphate. It carries out the reaction O-phospho-L-threonyl-[protein] + H2O = L-threonyl-[protein] + phosphate. The polypeptide is Probable protein phosphatase 2C T23F11.1 (ppm-2) (Caenorhabditis elegans).